The following is a 297-amino-acid chain: 4-diphosphocytidyl-2-C-methyl-D-erythritol kinase (297 aa).

Lys-22 is an active-site residue. Residue 111–121 (PSQAGMGGGSS) coordinates ATP. The active site involves Asp-153.

Belongs to the GHMP kinase family. IspE subfamily.

It catalyses the reaction 4-CDP-2-C-methyl-D-erythritol + ATP = 4-CDP-2-C-methyl-D-erythritol 2-phosphate + ADP + H(+). It functions in the pathway isoprenoid biosynthesis; isopentenyl diphosphate biosynthesis via DXP pathway; isopentenyl diphosphate from 1-deoxy-D-xylulose 5-phosphate: step 3/6. In terms of biological role, catalyzes the phosphorylation of the position 2 hydroxy group of 4-diphosphocytidyl-2C-methyl-D-erythritol. In Polaromonas naphthalenivorans (strain CJ2), this protein is 4-diphosphocytidyl-2-C-methyl-D-erythritol kinase.